The primary structure comprises 256 residues: DNA repair protein RecO (256 aa).

The protein belongs to the RecO family.

Functionally, involved in DNA repair and RecF pathway recombination. In Nocardia farcinica (strain IFM 10152), this protein is DNA repair protein RecO.